The primary structure comprises 1149 residues: Bone sialoprotein-binding protein (1149 aa).

The signal sequence occupies residues 1 to 52 (MINRDNKKAITKKGMISNRLNKFSIRKYTVGTASILVGTTLIFGLGNQEAKA). Positions 53 to 601 (AENTSTENAK…GDGTVKPEEK (549 aa)) are ligand binding A region. Disordered regions lie at residues 54–249 (ENTS…TAPT) and 675–697 (LPTK…VTVK). A compositionally biased stretch (basic and acidic residues) spans 61 to 75 (AKQDEASASDNKEVV). Over residues 77 to 89 (ETENNSTQKNDLT) the composition is skewed to polar residues. Positions 92 to 106 (IKKETNTDSHQEAKE) are enriched in basic and acidic residues. Residues 109-126 (TTSSTQQQQNNATTSTET) are compositionally biased toward low complexity. The span at 130 to 145 (NIEKENVKPSTDKTAT) shows a compositional bias: basic and acidic residues. Residues 158–205 (PNNTNNDVTTKPSTSEIQTTPTTPQESTNIENSQPQPTPSKVDNQVTD) show a composition bias toward polar residues. Over residues 216 to 241 (SKEELKNNPEKLKELVRNDSNTDRST) the composition is skewed to basic and acidic residues. CNA-B domains are found at residues 602–714 (LYKI…YKEP), 715–824 (KYNL…YKTP), and 825–935 (KYSL…EEDT). A disordered region spans residues 896 to 1124 (TQTGTNTTED…TGSENNGSNN (229 aa)). Composition is skewed to acidic residues over residues 903-913 (TEDDKDADGGE) and 930-1088 (YFEE…DSDS). The short motif at 1112 to 1116 (LPETG) is the LPXTG sorting signal element. Thr-1115 is subject to Pentaglycyl murein peptidoglycan amidated threonine. Residues 1116–1149 (GSENNGSNNATLFGGLFAALGSLLLFGRRKKQNK) constitute a propeptide, removed by sortase.

It belongs to the serine-aspartate repeat-containing protein (SDr) family.

It localises to the secreted. Its subcellular location is the cell wall. Its function is as follows. Specifically interacts with bone sialoprotein (BSP), a glycoprotein of bone and dentin extracellular matrix. Could contribute to staphylococcal osteomyelitis and arthritis. The polypeptide is Bone sialoprotein-binding protein (bbp) (Staphylococcus aureus).